Here is a 256-residue protein sequence, read N- to C-terminus: Geranylgeranylglyceryl phosphate synthase (256 aa).

The Mg(2+) site is built by Asp28 and Ser53. Sn-glycerol 1-phosphate contacts are provided by residues 172-178 (YLEAGSG), 203-204 (GG), and 225-226 (GT).

Belongs to the GGGP/HepGP synthase family. Group II subfamily. Mg(2+) serves as cofactor.

It localises to the cytoplasm. The enzyme catalyses sn-glycerol 1-phosphate + (2E,6E,10E)-geranylgeranyl diphosphate = sn-3-O-(geranylgeranyl)glycerol 1-phosphate + diphosphate. It participates in membrane lipid metabolism; glycerophospholipid metabolism. Functionally, prenyltransferase that catalyzes the transfer of the geranylgeranyl moiety of geranylgeranyl diphosphate (GGPP) to the C3 hydroxyl of sn-glycerol-1-phosphate (G1P). This reaction is the first ether-bond-formation step in the biosynthesis of archaeal membrane lipids. This chain is Geranylgeranylglyceryl phosphate synthase, found in Methanococcus maripaludis (strain C5 / ATCC BAA-1333).